A 722-amino-acid polypeptide reads, in one-letter code: DUF724 domain-containing protein 7 (722 aa).

The disordered stretch occupies residues 424 to 449 (KTTPKKKLQAMKNQKSSTNDSVGEKV). Residues 434–444 (MKNQKSSTNDS) are compositionally biased toward polar residues. The DUF724 domain maps to 540–720 (VLPFVKKSQL…HEFQAILAAP (181 aa)). Residues 645–712 (CALEELKAVE…DQEVQNVDHE (68 aa)) are a coiled coil.

In terms of assembly, homodimer. Interacts wtih ABAP1, ARIA and LHP1. Interacts with the non-modified histones H1, H2B, H3 and H4. In terms of tissue distribution, expressed in roots, leaves, stems and flowers.

The protein resides in the nucleus. May act as a link between DNA replication, transcription and chromatin remodeling during flower development. May participate in the repression of LHP1-targeted genes during flower development by direct interaction with LHP1. May be involved in the polar growth of plant cells via transportation of RNAs. This chain is DUF724 domain-containing protein 7, found in Arabidopsis thaliana (Mouse-ear cress).